Consider the following 478-residue polypeptide: Glutamyl-tRNA reductase (478 aa).

Residues 49 to 52 (TCNR), Ser-109, 114 to 116 (EQQ), and Gln-120 each bind substrate. Cys-50 (nucleophile) is an active-site residue. 191-196 (GAGSMG) serves as a coordination point for NADP(+).

This sequence belongs to the glutamyl-tRNA reductase family. Homodimer.

It catalyses the reaction (S)-4-amino-5-oxopentanoate + tRNA(Glu) + NADP(+) = L-glutamyl-tRNA(Glu) + NADPH + H(+). It functions in the pathway porphyrin-containing compound metabolism; protoporphyrin-IX biosynthesis; 5-aminolevulinate from L-glutamyl-tRNA(Glu): step 1/2. In terms of biological role, catalyzes the NADPH-dependent reduction of glutamyl-tRNA(Glu) to glutamate 1-semialdehyde (GSA). The polypeptide is Glutamyl-tRNA reductase (Rhodococcus opacus (strain B4)).